The chain runs to 142 residues: 3-hydroxyacyl-[acyl-carrier-protein] dehydratase FabZ (142 aa).

His-48 is an active-site residue.

Belongs to the thioester dehydratase family. FabZ subfamily.

Its subcellular location is the cytoplasm. The catalysed reaction is a (3R)-hydroxyacyl-[ACP] = a (2E)-enoyl-[ACP] + H2O. Its function is as follows. Involved in unsaturated fatty acids biosynthesis. Catalyzes the dehydration of short chain beta-hydroxyacyl-ACPs and long chain saturated and unsaturated beta-hydroxyacyl-ACPs. The protein is 3-hydroxyacyl-[acyl-carrier-protein] dehydratase FabZ of Anoxybacillus flavithermus (strain DSM 21510 / WK1).